Reading from the N-terminus, the 378-residue chain is Phosphoglycerate kinase (378 aa).

Val1, Asp2, Phe3, Asn4, Asn16, Arg17, Ser40, His41, Gly43, Arg44, Leu99, Arg100, His147, and Arg148 together coordinate (2R)-3-phosphoglycerate. ADP is bound at residue Gly191. Gly191 contacts CDP. Residues Ala192 and Lys193 each coordinate AMP. Ala192 is an ATP binding site. Position 192 (Ala192) interacts with Mg(2+). Asp196 contacts CDP. Asp196 is a Mg(2+) binding site. Lys197 serves as a coordination point for AMP. Residue Lys197 participates in ATP binding. Gly215 serves as a coordination point for ADP. Gly215 is a binding site for CDP. Residues Gly216 and Gly288 each contribute to the AMP site. Residues Gly216 and Gly288 each contribute to the ATP site. 2 residues coordinate CDP: Gly313 and Phe318. An ADP-binding site is contributed by Phe318. Glu319 serves as a coordination point for AMP. Residues Glu319, Asp351, and Thr352 each coordinate ATP. Residue Asp351 participates in Mg(2+) binding.

This sequence belongs to the phosphoglycerate kinase family. Monomer. It depends on Mg(2+) as a cofactor.

It catalyses the reaction (2R)-3-phosphoglycerate + ATP = (2R)-3-phospho-glyceroyl phosphate + ADP. Its pathway is carbohydrate degradation; glycolysis; pyruvate from D-glyceraldehyde 3-phosphate: step 2/5. This Condylostoma magnum protein is Phosphoglycerate kinase (PGK).